The primary structure comprises 227 residues: MTKRAIVLLSGGLDSATVLAMANAAGFETYALSMRYGQRHSSELEAAKRVAAELGAKRHEIIDLDLRRFGGSALTDDALDVPTDGAAGGIPITYVPARNTIMLSLALGWAEAIGGRDLFFGANAVDYSGYPDCRPEYVAAYETLANLATKAGVEGDRFHVHAPIIDMTKAEIILAGVKLGVDYGLTVSCYKADDDGRACGVCDSCRIRRAGFEAAGVPDPTRYQTPN.

9-19 is a binding site for ATP; the sequence is LSGGLDSATVL. Zn(2+)-binding residues include C189, C199, C202, and C205.

This sequence belongs to the QueC family. Zn(2+) is required as a cofactor.

It carries out the reaction 7-carboxy-7-deazaguanine + NH4(+) + ATP = 7-cyano-7-deazaguanine + ADP + phosphate + H2O + H(+). It participates in purine metabolism; 7-cyano-7-deazaguanine biosynthesis. Functionally, catalyzes the ATP-dependent conversion of 7-carboxy-7-deazaguanine (CDG) to 7-cyano-7-deazaguanine (preQ(0)). The protein is 7-cyano-7-deazaguanine synthase of Cupriavidus metallidurans (strain ATCC 43123 / DSM 2839 / NBRC 102507 / CH34) (Ralstonia metallidurans).